A 613-amino-acid polypeptide reads, in one-letter code: MINLTRQRYRVSNLVTGGTSLDVILSHSPNKFTFPPLLKSCAKLGDVVQGRILHAQVVKTGFFVDVFTATALVSMYMKVKQVTDALKVLDEMPERGIASVNAAVSGLLENGFCRDAFRMFGDARVSGSGMNSVTVASVLGGCGDIEGGMQLHCLAMKSGFEMEVYVGTSLVSMYSRCGEWVLAARMFEKVPHKSVVTYNAFISGLMENGVMNLVPSVFNLMRKFSSEEPNDVTFVNAITACASLLNLQYGRQLHGLVMKKEFQFETMVGTALIDMYSKCRCWKSAYIVFTELKDTRNLISWNSVISGMMINGQHETAVELFEKLDSEGLKPDSATWNSLISGFSQLGKVIEAFKFFERMLSVVMVPSLKCLTSLLSACSDIWTLKNGKEIHGHVIKAAAERDIFVLTSLIDMYMKCGLSSWARRIFDRFEPKPKDPVFWNVMISGYGKHGECESAIEIFELLREEKVEPSLATFTAVLSACSHCGNVEKGSQIFRLMQEEYGYKPSTEHIGCMIDLLGRSGRLREAKEVIDQMSEPSSSVYSSLLGSCRQHLDPVLGEEAAMKLAELEPENPAPFVILSSIYAALERWEDVESIRQVIDQKQLVKLPGLSLSG.

PPR repeat units follow at residues 30-64, 65-99, 101-126, 128-162, 163-193, 194-228, 230-264, 265-295, 297-331, 332-366, 367-401, 402-432, 435-469, 470-500, and 506-539; these read NKFT…GFFV, DVFT…GIAS, NAAV…ARVS, SGMN…GFEM, EVYV…VPHK, SVVT…SSEE, NDVT…EFQF, ETMV…LKDT, NLIS…GLKP, DSAT…VMVP, SLKC…AAER, DIFV…FEPK, DPVF…KVEP, SLAT…MQEE, and STEH…PSSS. The type E motif; degenerate stretch occupies residues 540 to 613; it reads VYSSLLGSCR…VKLPGLSLSG (74 aa).

This sequence belongs to the PPR family. PCMP-E subfamily.

This chain is Pentatricopeptide repeat-containing protein At2g02750 (PCMP-E22), found in Arabidopsis thaliana (Mouse-ear cress).